The sequence spans 114 residues: uncharacterized protein (114 aa).

This is an uncharacterized protein from Bacillus subtilis (strain 168).